A 252-amino-acid chain; its full sequence is Triosephosphate isomerase (252 aa).

Substrate is bound at residue 11–13 (NWK). The active-site Electrophile is H97. The active-site Proton acceptor is E169. Residues G175, S215, and 236–237 (GG) contribute to the substrate site.

Belongs to the triosephosphate isomerase family. Homodimer.

It is found in the cytoplasm. The enzyme catalyses D-glyceraldehyde 3-phosphate = dihydroxyacetone phosphate. It participates in carbohydrate biosynthesis; gluconeogenesis. It functions in the pathway carbohydrate degradation; glycolysis; D-glyceraldehyde 3-phosphate from glycerone phosphate: step 1/1. In terms of biological role, involved in the gluconeogenesis. Catalyzes stereospecifically the conversion of dihydroxyacetone phosphate (DHAP) to D-glyceraldehyde-3-phosphate (G3P). The polypeptide is Triosephosphate isomerase (Mycoplasmoides gallisepticum (strain R(low / passage 15 / clone 2)) (Mycoplasma gallisepticum)).